A 250-amino-acid chain; its full sequence is NAD-dependent protein deacylase 1 (250 aa).

The Deacetylase sirtuin-type domain occupies 1-250 (MRAVVELLAG…PELLRRAFPG (250 aa)). NAD(+) is bound at residue 19 to 39 (GAGVSAESGIPTFRDALGGLW). The substrate site is built by tyrosine 64 and arginine 67. 98-101 (QNVD) contacts NAD(+). The active-site Proton acceptor is histidine 116. 4 residues coordinate Zn(2+): cysteine 124, cysteine 127, cysteine 152, and cysteine 155. Residues 192–194 (GTS), 218–220 (NPQ), and alanine 236 contribute to the NAD(+) site.

It belongs to the sirtuin family. Class III subfamily. The cofactor is Zn(2+).

The protein localises to the cytoplasm. It carries out the reaction N(6)-acetyl-L-lysyl-[protein] + NAD(+) + H2O = 2''-O-acetyl-ADP-D-ribose + nicotinamide + L-lysyl-[protein]. The enzyme catalyses N(6)-succinyl-L-lysyl-[protein] + NAD(+) + H2O = 2''-O-succinyl-ADP-D-ribose + nicotinamide + L-lysyl-[protein]. In terms of biological role, NAD-dependent lysine deacetylase and desuccinylase that specifically removes acetyl and succinyl groups on target proteins. Modulates the activities of several proteins which are inactive in their acylated form. The protein is NAD-dependent protein deacylase 1 of Pseudomonas aeruginosa (strain ATCC 15692 / DSM 22644 / CIP 104116 / JCM 14847 / LMG 12228 / 1C / PRS 101 / PAO1).